The chain runs to 349 residues: Homeobox-leucine zipper protein HOX7 (349 aa).

A disordered region spans residues 42 to 186 (RATRRDEQDD…PKQKSDLANR (145 aa)). Composition is skewed to polar residues over residues 89-99 (SAETGSANSEM) and 121-135 (SSPSSMQEASTRQQV). The segment at residues 150–209 (GARKKLRLSKEQSSFLEDSFKEHSTLTPKQKSDLANRLNLRPRQVEVWFQNRRARTKLKQ) is a DNA-binding region (homeobox). Over residues 167 to 183 (DSFKEHSTLTPKQKSDL) the composition is skewed to basic and acidic residues. Residues 208 to 252 (KQTEVDCEHLKRCCERLTRENRRLQREVAELRGTLRTTTSSYPPL) are leucine-zipper.

This sequence belongs to the HD-ZIP homeobox family. Class II subfamily. As to quaternary structure, homodimer. May form a heterodimer with HOX1, HOX2 or HOX3. Expressed in seedlings, roots, leaves, nodes, internodes, flowers and embryo.

The protein resides in the nucleus. Its function is as follows. Probable transcription factor that binds to the DNA sequence 5'-CAAT[GC]ATTG-3'. This is Homeobox-leucine zipper protein HOX7 (HOX7) from Oryza sativa subsp. japonica (Rice).